The following is a 489-amino-acid chain: Ketol-acid reductoisomerase (NADP(+)) (489 aa).

One can recognise a KARI N-terminal Rossmann domain in the interval Ile-16 to Ser-207. NADP(+) contacts are provided by residues Cys-44 to Gln-47, Arg-67, Ser-77, and Asp-107 to Gln-109. Residue His-131 is part of the active site. Gly-157 contacts NADP(+). KARI C-terminal knotted domains lie at Ser-208–Asp-343 and Tyr-344–Met-483. Residues Asp-216, Glu-220, Glu-388, and Glu-392 each contribute to the Mg(2+) site. A substrate-binding site is contributed by Ser-413.

This sequence belongs to the ketol-acid reductoisomerase family. It depends on Mg(2+) as a cofactor.

The catalysed reaction is (2R)-2,3-dihydroxy-3-methylbutanoate + NADP(+) = (2S)-2-acetolactate + NADPH + H(+). The enzyme catalyses (2R,3R)-2,3-dihydroxy-3-methylpentanoate + NADP(+) = (S)-2-ethyl-2-hydroxy-3-oxobutanoate + NADPH + H(+). The protein operates within amino-acid biosynthesis; L-isoleucine biosynthesis; L-isoleucine from 2-oxobutanoate: step 2/4. It functions in the pathway amino-acid biosynthesis; L-valine biosynthesis; L-valine from pyruvate: step 2/4. Involved in the biosynthesis of branched-chain amino acids (BCAA). Catalyzes an alkyl-migration followed by a ketol-acid reduction of (S)-2-acetolactate (S2AL) to yield (R)-2,3-dihydroxy-isovalerate. In the isomerase reaction, S2AL is rearranged via a Mg-dependent methyl migration to produce 3-hydroxy-3-methyl-2-ketobutyrate (HMKB). In the reductase reaction, this 2-ketoacid undergoes a metal-dependent reduction by NADPH to yield (R)-2,3-dihydroxy-isovalerate. The protein is Ketol-acid reductoisomerase (NADP(+)) of Buchnera aphidicola subsp. Diuraphis noxia.